Reading from the N-terminus, the 200-residue chain is Large ribosomal subunit protein bL25 (200 aa).

Disordered regions lie at residues 1–20 (MTIEFNATKREGQGSSASRR) and 179–200 (PVVASAQTTRGAAAAEGEGEAA).

The protein belongs to the bacterial ribosomal protein bL25 family. CTC subfamily. In terms of assembly, part of the 50S ribosomal subunit; part of the 5S rRNA/L5/L18/L25 subcomplex. Contacts the 5S rRNA. Binds to the 5S rRNA independently of L5 and L18.

In terms of biological role, this is one of the proteins that binds to the 5S RNA in the ribosome where it forms part of the central protuberance. The sequence is that of Large ribosomal subunit protein bL25 from Azoarcus sp. (strain BH72).